A 96-amino-acid polypeptide reads, in one-letter code: Large ribosomal subunit protein bL28 (96 aa).

The interval 1–23 (MSRVCELSGKAPMTGNTVSHANN) is disordered.

The protein belongs to the bacterial ribosomal protein bL28 family.

This chain is Large ribosomal subunit protein bL28, found in Cereibacter sphaeroides (strain ATCC 17029 / ATH 2.4.9) (Rhodobacter sphaeroides).